The primary structure comprises 345 residues: Phosphate acyltransferase (345 aa).

The protein belongs to the PlsX family. In terms of assembly, homodimer. Probably interacts with PlsY.

Its subcellular location is the cytoplasm. The catalysed reaction is a fatty acyl-[ACP] + phosphate = an acyl phosphate + holo-[ACP]. It functions in the pathway lipid metabolism; phospholipid metabolism. Functionally, catalyzes the reversible formation of acyl-phosphate (acyl-PO(4)) from acyl-[acyl-carrier-protein] (acyl-ACP). This enzyme utilizes acyl-ACP as fatty acyl donor, but not acyl-CoA. The protein is Phosphate acyltransferase of Dichelobacter nodosus (strain VCS1703A).